Consider the following 358-residue polypeptide: Probable (S)-tetrahydroprotoberberine N-methyltransferase 2 (358 aa).

Residues serine 98, glycine 136, asparagine 160, glutamine 164, aspartate 186, valine 187, and isoleucine 202 each coordinate S-adenosyl-L-methionine. The active site involves cysteine 333.

This sequence belongs to the CFA/CMAS family. In terms of assembly, homodimer.

The protein localises to the cytoplasm. It catalyses the reaction (S)-stylopine + S-adenosyl-L-methionine = (S)-cis-N-methylstylopine + S-adenosyl-L-homocysteine. It carries out the reaction (S)-tetrahydropalmatine + S-adenosyl-L-methionine = (S)-cis-N-methyltetrahydropalmatine + S-adenosyl-L-homocysteine. Its pathway is alkaloid biosynthesis. Its function is as follows. N-methyltransferase with a strict substrate specificity for (R,S)-tetrahydropalmatine or (R,S)-stylopine. The polypeptide is Probable (S)-tetrahydroprotoberberine N-methyltransferase 2 (Papaver bracteatum (Great scarlet poppy)).